Here is a 200-residue protein sequence, read N- to C-terminus: 3-isopropylmalate dehydratase small subunit (200 aa).

It belongs to the LeuD family. LeuD type 1 subfamily. Heterodimer of LeuC and LeuD.

The catalysed reaction is (2R,3S)-3-isopropylmalate = (2S)-2-isopropylmalate. Its pathway is amino-acid biosynthesis; L-leucine biosynthesis; L-leucine from 3-methyl-2-oxobutanoate: step 2/4. Catalyzes the isomerization between 2-isopropylmalate and 3-isopropylmalate, via the formation of 2-isopropylmaleate. In Pectobacterium carotovorum subsp. carotovorum (strain PC1), this protein is 3-isopropylmalate dehydratase small subunit.